The following is a 290-amino-acid chain: UDP-N-acetylenolpyruvoylglucosamine reductase (290 aa).

Residues 20–187 (GVGGESEMWF…SRVRLKLRPS (168 aa)) enclose the FAD-binding PCMH-type domain. Arg167 is an active-site residue.

Belongs to the MurB family. It depends on FAD as a cofactor.

It localises to the cytoplasm. The catalysed reaction is UDP-N-acetyl-alpha-D-muramate + NADP(+) = UDP-N-acetyl-3-O-(1-carboxyvinyl)-alpha-D-glucosamine + NADPH + H(+). It functions in the pathway cell wall biogenesis; peptidoglycan biosynthesis. Its function is as follows. Cell wall formation. This is UDP-N-acetylenolpyruvoylglucosamine reductase from Deinococcus radiodurans (strain ATCC 13939 / DSM 20539 / JCM 16871 / CCUG 27074 / LMG 4051 / NBRC 15346 / NCIMB 9279 / VKM B-1422 / R1).